Here is a 583-residue protein sequence, read N- to C-terminus: 2-succinyl-5-enolpyruvyl-6-hydroxy-3-cyclohexene-1-carboxylate synthase (583 aa).

Belongs to the TPP enzyme family. MenD subfamily. Homodimer. It depends on Mg(2+) as a cofactor. The cofactor is Mn(2+). Requires thiamine diphosphate as cofactor.

The catalysed reaction is isochorismate + 2-oxoglutarate + H(+) = 5-enolpyruvoyl-6-hydroxy-2-succinyl-cyclohex-3-ene-1-carboxylate + CO2. It functions in the pathway quinol/quinone metabolism; 1,4-dihydroxy-2-naphthoate biosynthesis; 1,4-dihydroxy-2-naphthoate from chorismate: step 2/7. It participates in quinol/quinone metabolism; menaquinone biosynthesis. Its function is as follows. Catalyzes the thiamine diphosphate-dependent decarboxylation of 2-oxoglutarate and the subsequent addition of the resulting succinic semialdehyde-thiamine pyrophosphate anion to isochorismate to yield 2-succinyl-5-enolpyruvyl-6-hydroxy-3-cyclohexene-1-carboxylate (SEPHCHC). This chain is 2-succinyl-5-enolpyruvyl-6-hydroxy-3-cyclohexene-1-carboxylate synthase, found in Chlorobium limicola (strain DSM 245 / NBRC 103803 / 6330).